A 280-amino-acid polypeptide reads, in one-letter code: Lysosome-associated membrane glycoprotein 5 (280 aa).

Positions 1-29 (MDLRVRTLLGGDRLRILLMFFHVMVQTVA) are cleaved as a signal peptide. Over 30-235 (EQEVENLSGL…PVDEQEQLEE (206 aa)) the chain is Extracellular. N-linked (GlcNAc...) asparagine glycans are attached at residues N35, N53, N102, and N127. The helical transmembrane segment at 236 to 256 (TLPLILGLILGLVIVITLVIY) threads the bilayer. Residues 257–280 (HIHHKMTANQVQIPRDRSQYKHMG) lie on the Cytoplasmic side of the membrane.

It belongs to the LAMP family. Glycosylated. In terms of tissue distribution, in brain, strongly expressed in the globus pallidus/ventral pallidum complex, the substantia nigra pars reticulata and the entopeduncular nucleus (at protein level). Expressed in the external plexiform layer of the olfactory bulb (at protein level). May be weakly expressed in neocortex and striatum (at protein level). Highly expressed in brain; not detected in other tissues tested. Detected in the cingulate cortex, cortical plate and caudate putamen. In neocortex, specifically expressed in neurons of layers II/III and V.

The protein resides in the cytoplasmic vesicle membrane. The protein localises to the cell membrane. It is found in the cell projection. It localises to the dendrite. Its subcellular location is the cytoplasmic vesicle. The protein resides in the secretory vesicle. The protein localises to the synaptic vesicle membrane. It is found in the growth cone membrane. It localises to the early endosome membrane. Its subcellular location is the recycling endosome. The protein resides in the endoplasmic reticulum-Golgi intermediate compartment membrane. The protein localises to the endosome membrane. Plays a role in short-term synaptic plasticity in a subset of GABAergic neurons in the brain. The sequence is that of Lysosome-associated membrane glycoprotein 5 (Lamp5) from Mus musculus (Mouse).